Consider the following 419-residue polypeptide: Squamosa promoter-binding-like protein 2 (419 aa).

Residues 77 to 96 form a disordered region; it reads SAEVRTHNFTSETGESLPGE. The segment at 166 to 243 adopts an SBP-type zinc-finger fold; that stretch reads TPHCQVEGCN…SDHNARRRKP (78 aa). Zn(2+) contacts are provided by C169, C174, C191, H194, C210, C213, H217, and C229. The short motif at 226–242 is the Bipartite nuclear localization signal element; that stretch reads KRSCRRRLSDHNARRRK. The segment at 230–249 is disordered; that stretch reads RRRLSDHNARRRKPNPGRTY.

The cofactor is Zn(2+).

It localises to the nucleus. In terms of biological role, trans-acting factor that binds specifically to the consensus nucleotide sequence 5'-TNCGTACAA-3'. This Arabidopsis thaliana (Mouse-ear cress) protein is Squamosa promoter-binding-like protein 2 (SPL2).